The primary structure comprises 397 residues: Putative 8-amino-7-oxononanoate synthase (397 aa).

Residue R22 coordinates substrate. Position 109–110 (109–110 (GW)) interacts with pyridoxal 5'-phosphate. Position 139 (H139) interacts with substrate. Pyridoxal 5'-phosphate contacts are provided by residues S187, 212-215 (DEAH), and 241-244 (TFSK). Residue K244 is modified to N6-(pyridoxal phosphate)lysine. Residue T358 participates in substrate binding.

Belongs to the class-II pyridoxal-phosphate-dependent aminotransferase family. BioF subfamily. As to quaternary structure, homodimer. Requires pyridoxal 5'-phosphate as cofactor.

The enzyme catalyses 6-carboxyhexanoyl-[ACP] + L-alanine + H(+) = (8S)-8-amino-7-oxononanoate + holo-[ACP] + CO2. It functions in the pathway cofactor biosynthesis; biotin biosynthesis. Catalyzes the decarboxylative condensation of pimeloyl-[acyl-carrier protein] and L-alanine to produce 8-amino-7-oxononanoate (AON), [acyl-carrier protein], and carbon dioxide. The chain is Putative 8-amino-7-oxononanoate synthase (bioF) from Bordetella parapertussis (strain 12822 / ATCC BAA-587 / NCTC 13253).